A 199-amino-acid polypeptide reads, in one-letter code: Prolactin-1 (199 aa).

Disulfide bonds link C4/C11, C58/C174, and C191/C199. A glycan (N-linked (GlcNAc...) asparagine) is linked at N60.

It belongs to the somatotropin/prolactin family. Glycosylated.

It localises to the secreted. The protein is Prolactin-1 of Crocodylus novaeguineae (Crocodile).